Consider the following 294-residue polypeptide: MNMNHHDKLQRFLFDGAPVRGALVRLDGAWQQVLARRAYPQALKTVLGEMMAASVLMAANLKFDGSLILQIHGTGALKLAVVECNNDRTVRATAKWDGDLDGKPLKALLGEGGKFVLTLEPRLDKNQTWQGIVALEGDSVGQMLENYMLRSEQLDTALVLASGDEAAAGMLLQRLPEGHGEAEGWDRVQMLGRTLKAEELLGLGAEDILHRLFHEEQVRVFEQETVSFNCNCSRERVSNMLTMLGGQEVGDVLLEQGSVEIVCDYCNQRYVFDEEDANQLFDYDVVAAAREARH.

2 cysteine pairs are disulfide-bonded: Cys-230–Cys-232 and Cys-263–Cys-266.

Belongs to the HSP33 family. Under oxidizing conditions two disulfide bonds are formed involving the reactive cysteines. Under reducing conditions zinc is bound to the reactive cysteines and the protein is inactive.

The protein localises to the cytoplasm. In terms of biological role, redox regulated molecular chaperone. Protects both thermally unfolding and oxidatively damaged proteins from irreversible aggregation. Plays an important role in the bacterial defense system toward oxidative stress. The protein is 33 kDa chaperonin of Chromobacterium violaceum (strain ATCC 12472 / DSM 30191 / JCM 1249 / CCUG 213 / NBRC 12614 / NCIMB 9131 / NCTC 9757 / MK).